The following is an 868-amino-acid chain: Protein translocase subunit SecA (868 aa).

ATP is bound by residues glutamine 85, 103-107, and aspartate 508; that span reads GEGKT.

This sequence belongs to the SecA family. In terms of assembly, monomer and homodimer. Part of the essential Sec protein translocation apparatus which comprises SecA, SecYEG and auxiliary proteins SecDF. Other proteins may also be involved.

It localises to the cell membrane. It is found in the cytoplasm. The catalysed reaction is ATP + H2O + cellular proteinSide 1 = ADP + phosphate + cellular proteinSide 2.. Functionally, part of the Sec protein translocase complex. Interacts with the SecYEG preprotein conducting channel. Has a central role in coupling the hydrolysis of ATP to the transfer of proteins into and across the cell membrane, serving as an ATP-driven molecular motor driving the stepwise translocation of polypeptide chains across the membrane. This is Protein translocase subunit SecA from Deinococcus radiodurans (strain ATCC 13939 / DSM 20539 / JCM 16871 / CCUG 27074 / LMG 4051 / NBRC 15346 / NCIMB 9279 / VKM B-1422 / R1).